The following is a 243-amino-acid chain: MSGHSKWSTIKRKKGALDAKRNKIFTKLIREITIAAKIGGGDVESNPRLRVAVNKAKVANMPKDNIEKAIKKGIGGNEGVEYFEITYEAYAPYGVALMIKCLTDNKNRTSSDVKSVLAKGGGSLGTPGSVSYMFYRKGLIVYNLEKYLEDEIMEFALEAGVEDILVSNNEAEVITSPDDFDKVLSFLKTKFKEEMAEVALIPENKISLNKEQAEKIILLIEKLEDFDDVQEVIHNLEIPEELS.

Belongs to the TACO1 family.

The protein resides in the cytoplasm. This Borrelia garinii subsp. bavariensis (strain ATCC BAA-2496 / DSM 23469 / PBi) (Borreliella bavariensis) protein is Probable transcriptional regulatory protein BG0025.